A 259-amino-acid polypeptide reads, in one-letter code: Phosphatidylserine decarboxylase proenzyme (259 aa).

Ser-183 (schiff-base intermediate with substrate; via pyruvic acid) is an active-site residue. A Pyruvic acid (Ser); by autocatalysis modification is found at Ser-183.

It belongs to the phosphatidylserine decarboxylase family. PSD-A subfamily. As to quaternary structure, heterodimer of a large membrane-associated beta subunit and a small pyruvoyl-containing alpha subunit. Pyruvate is required as a cofactor. Is synthesized initially as an inactive proenzyme. Formation of the active enzyme involves a self-maturation process in which the active site pyruvoyl group is generated from an internal serine residue via an autocatalytic post-translational modification. Two non-identical subunits are generated from the proenzyme in this reaction, and the pyruvate is formed at the N-terminus of the alpha chain, which is derived from the carboxyl end of the proenzyme. The post-translation cleavage follows an unusual pathway, termed non-hydrolytic serinolysis, in which the side chain hydroxyl group of the serine supplies its oxygen atom to form the C-terminus of the beta chain, while the remainder of the serine residue undergoes an oxidative deamination to produce ammonia and the pyruvoyl prosthetic group on the alpha chain.

It localises to the cell membrane. The enzyme catalyses a 1,2-diacyl-sn-glycero-3-phospho-L-serine + H(+) = a 1,2-diacyl-sn-glycero-3-phosphoethanolamine + CO2. It participates in phospholipid metabolism; phosphatidylethanolamine biosynthesis; phosphatidylethanolamine from CDP-diacylglycerol: step 2/2. Its function is as follows. Catalyzes the formation of phosphatidylethanolamine (PtdEtn) from phosphatidylserine (PtdSer). In Neisseria gonorrhoeae (strain NCCP11945), this protein is Phosphatidylserine decarboxylase proenzyme.